The following is a 282-amino-acid chain: MGGTALNEIVKKVKIAEDVFDFWIHSPSVSKEARPGQFVVIRLHEKGERIPLTVADTKPEEGLFRMVVKVVGKTTHELSLKKEGDTILDVVGPLGNPSEIENYGNVLLVGGGVGIATLYPIAKALKEAGNNITTVLGARTKDYLIMVDEFKEISDVLLVTDDGSAGMKGVVTDAMDKLFRERKFDICWAVGPTIMMKFCTLKAREFGVPIWVSLNPIMVDGTGMCGACRVTVSGQIKFACVDGPEFRGEEVDWDELLKRLAQYREQEKISYERFLKTAGESE.

The FAD-binding FR-type domain maps to 2 to 100 (GGTALNEIVK…VGPLGNPSEI (99 aa)). 3 residues coordinate [2Fe-2S] cluster: Cys-225, Cys-228, and Cys-240.

This sequence belongs to the PyrK family. Requires [2Fe-2S] cluster as cofactor. FAD serves as cofactor.

The polypeptide is Dihydroorotate dehydrogenase B (NAD(+)), electron transfer subunit homolog (Thermotoga maritima (strain ATCC 43589 / DSM 3109 / JCM 10099 / NBRC 100826 / MSB8)).